The primary structure comprises 73 residues: Conotoxin CnIIIE (73 aa).

The signal sequence occupies residues 1-19 (MSKLGVLLTICLLLFPLTA). The propeptide occupies 20 to 49 (LPMDGDQSVDRPAERMQDDISSEQYPLFNQ). 3 disulfides stabilise this stretch: Cys-53–Cys-72, Cys-54–Cys-70, and Cys-60–Cys-73.

The protein belongs to the conotoxin M superfamily. In terms of tissue distribution, expressed by the venom duct.

It is found in the secreted. Functionally, shows a paralytic effect in fish. The polypeptide is Conotoxin CnIIIE (Conus consors (Singed cone)).